The sequence spans 285 residues: Shikimate dehydrogenase (NADP(+)) (285 aa).

Shikimate is bound by residues 22–24 (SMS) and threonine 69. Lysine 73 serves as the catalytic Proton acceptor. Aspartate 85 contacts NADP(+). Asparagine 94 and aspartate 110 together coordinate shikimate. NADP(+)-binding positions include 136–140 (GAGGA), 160–165 (NRTVAR), and methionine 225. Residue tyrosine 227 participates in shikimate binding. Residue glycine 248 participates in NADP(+) binding.

It belongs to the shikimate dehydrogenase family. As to quaternary structure, homodimer.

It carries out the reaction shikimate + NADP(+) = 3-dehydroshikimate + NADPH + H(+). The protein operates within metabolic intermediate biosynthesis; chorismate biosynthesis; chorismate from D-erythrose 4-phosphate and phosphoenolpyruvate: step 4/7. Involved in the biosynthesis of the chorismate, which leads to the biosynthesis of aromatic amino acids. Catalyzes the reversible NADPH linked reduction of 3-dehydroshikimate (DHSA) to yield shikimate (SA). The chain is Shikimate dehydrogenase (NADP(+)) from Caulobacter vibrioides (strain ATCC 19089 / CIP 103742 / CB 15) (Caulobacter crescentus).